The chain runs to 420 residues: Carboxypeptidase A4 (420 aa).

The first 16 residues, M1–C16, serve as a signal peptide directing secretion. Positions G17–R113 are cleaved as a propeptide — activation peptide. P69, V71, N118, Y122, H123, E126, and F162 together coordinate a protein. Residues A121–V415 enclose the Peptidase M14 domain. Zn(2+)-binding residues include H180 and E183. C249 and C272 are joined by a disulfide. Residue N259 is glycosylated (N-linked (GlcNAc...) asparagine). H307 contributes to the Zn(2+) binding site. Catalysis depends on E381, which acts as the Proton donor/acceptor.

It belongs to the peptidase M14 family. Interacts with LXN. Zn(2+) is required as a cofactor.

It is found in the secreted. Metalloprotease that cleaves hydrophobic C-terminal residues with a preference for -Phe, -Leu, -Ile, -Met, -Tyr and -Val. May function in peptide hormone and/or neuropeptide catabolism. The polypeptide is Carboxypeptidase A4 (Cpa4) (Mus musculus (Mouse)).